Consider the following 322-residue polypeptide: Protein lin-56 (322 aa).

Positions 264 to 322 are disordered; that stretch reads SSQKLQQNGFPEKVEQMDKYSNKLKDEASDKKYEKPGKKDYVEEEGYWAPITDSEDDEA. Residues 275-304 show a composition bias toward basic and acidic residues; sequence EKVEQMDKYSNKLKDEASDKKYEKPGKKDY.

As to expression, widely expressed throughout embryonic development. Expressed in the six multipotent ventral ectodermal blast cells, P3.p-P8.p, which generate the vulva and in their descendants throughout vulval development.

It is found in the nucleus. Its function is as follows. Required for translation, stability and/or localization of lin-15a. This is Protein lin-56 (lin-56) from Caenorhabditis elegans.